The primary structure comprises 228 residues: UPF0758 protein SH1266 (228 aa).

The MPN domain occupies Lys102–Phe224. Zn(2+)-binding residues include His173, His175, and Asp186. The JAMM motif signature appears at His173–Asp186.

It belongs to the UPF0758 family.

This is UPF0758 protein SH1266 from Staphylococcus haemolyticus (strain JCSC1435).